A 715-amino-acid chain; its full sequence is MSSLFVWLNRLAISAMQRSEVVGAAIVMSIVFMMIIPLPTGLIDVLIALNICISSLLIVLAMYLPKPLAFSTFPSVLLLTTMFRLALSISTTRQILLQQDAGHIVEAFGNFVVGGNLAVGLVIFLILTVVNFLVITKGSERVAEVAARFTLDAMPGKQMSIDSDLRAGLIEAHQARQRRENLAKESQLFGAMDGAMKFVKGDAIAGLVIVFINMIGGFAIGVLQNGMEAGAAMHIYSVLTIGDGLIAQIPALLISLTAGMIITRVSADGQQVDANIGREIAEQLTSQPKAWIMSAAGMLGFALLPGMPTAVFVIISAIALGSGLFQLWRIKQQDSQQQADELHAQQLAPEDNGYQDLRRFNPTRAYLLQFSQEHLNSEAAESLIQHIRRLRNRLVYHFGFTLPSFDIEFSPALAADEFRFCVYEIPLVTATFAVEQLAVRTSSIEIHLADGESDGQIQPGQAERDEHHWCWLPPQHPLLQQEDRRCWNAQQLIMLRMEQAIHQSGAQFIGLQESKSILNWLESEQPELAQELQRIMPLSRFAAVLQRLASERIPLRSVRTIAETLIEHGQHERDSAALTDFVRIALKEHICHQYQQPNGLNVWLLTPETEELLRDSLRQAQSETFFSLAQEYGINLLNQMRSAFPPYDNHHALILVAQDLRSPLRALLKDEFHAVPVLSFAELTSNVAINVLGRLDLQQSPPELQENDPCMNYAY.

Transmembrane regions (helical) follow at residues 23 to 43 (GAAI…TGLI), 45 to 65 (VLIA…MYLP), 69 to 89 (AFST…ALSI), 115 to 135 (GNLA…FLVI), 203 to 223 (AIAG…IGVL), 241 to 261 (IGDG…AGMI), and 298 to 318 (MLGF…ISAI).

The protein belongs to the FHIPEP (flagella/HR/invasion proteins export pore) family.

It is found in the cell inner membrane. In terms of biological role, involved in the secretion of harpin; a proteinaceous elicitor of the hypersensitivity response in plants. The protein is Harpin secretion protein HrpI (hrpI) of Erwinia amylovora (Fire blight bacteria).